Consider the following 367-residue polypeptide: Cyclin-dependent kinase 5 activator 2 (367 aa).

Positions 1 to 11 (MGTVLSLSPAS) are enriched in polar residues. Disordered regions lie at residues 1 to 56 (MGTV…RLKR), 72 to 98 (ASAKKKKGSKKVTPKPASTGPDPLVQQ), 131 to 175 (AAAT…GSPR), and 329 to 367 (GEAAASGGGPPSGGAPAASSAARDSCAAGTKHWTMNLDR). A lipid anchor (N-myristoyl glycine) is attached at glycine 2. Over residues 74 to 84 (AKKKKGSKKVT) the composition is skewed to basic residues. Threonine 84 carries the phosphothreonine modification. Over residues 131 to 148 (AAATCEPPSGGSAAAQPP) the composition is skewed to low complexity. The span at 154-171 (KPPPPPPPAPQVAPPVPG) shows a compositional bias: pro residues. Residues 342–357 (GAPAASSAARDSCAAG) show a composition bias toward low complexity.

Belongs to the cyclin-dependent kinase 5 activator family. In terms of assembly, heterodimer of a catalytic subunit and a regulatory subunit. In terms of processing, myristoylated. The Gly-2-Ala mutant is absent of the cell periphery, suggesting that a proper myristoylation signal is essential for the proper distribution of CDK5R2 (p39). In terms of tissue distribution, brain and neuron specific.

The protein resides in the cell membrane. Activator of CDK5/TPKII. This Homo sapiens (Human) protein is Cyclin-dependent kinase 5 activator 2 (CDK5R2).